A 241-amino-acid polypeptide reads, in one-letter code: MTALPATSIAAPSLDDLDALNAHLETLRADERVAWALQHGPQQAALSSSFGAQSAVTLHLLTQQRPDIPVILIDTGYLFPETYRFADALTERLSLNLQVYRPLVSRAWMEARHGRLWEQGMVGIDQYNNLRKVEPMRRALDELNVGTWFTGLRRSQSGGRAQTPIVQKRGDRYKISPIADWTDRDVWQYLQAHALPYHPLWEQGYVSIGDFHTTRRWEPGMREEDTRFFGLKRECGIHEDI.

Cys235 (nucleophile; cysteine thiosulfonate intermediate) is an active-site residue.

This sequence belongs to the PAPS reductase family. CysH subfamily.

It is found in the cytoplasm. The catalysed reaction is [thioredoxin]-disulfide + sulfite + adenosine 3',5'-bisphosphate + 2 H(+) = [thioredoxin]-dithiol + 3'-phosphoadenylyl sulfate. It participates in sulfur metabolism; hydrogen sulfide biosynthesis; sulfite from sulfate: step 3/3. Functionally, catalyzes the formation of sulfite from phosphoadenosine 5'-phosphosulfate (PAPS) using thioredoxin as an electron donor. The polypeptide is Phosphoadenosine 5'-phosphosulfate reductase (Xanthomonas campestris pv. campestris (strain 8004)).